Consider the following 432-residue polypeptide: Adenylosuccinate synthetase (432 aa).

GTP is bound by residues 12–18 and 40–42; these read GDEGKGK and GHT. Catalysis depends on Asp-13, which acts as the Proton acceptor. Residues Asp-13 and Gly-40 each coordinate Mg(2+). IMP is bound by residues 13–16, 38–41, Thr-132, Arg-146, Gln-226, Thr-241, and Arg-305; these read DEGK and NAGH. His-41 serves as the catalytic Proton donor. A substrate-binding site is contributed by 301-307; the sequence is TVTGRKR. GTP is bound by residues Arg-307, 333–335, and 415–417; these read KLD and STS.

The protein belongs to the adenylosuccinate synthetase family. In terms of assembly, homodimer. The cofactor is Mg(2+).

It localises to the cytoplasm. The catalysed reaction is IMP + L-aspartate + GTP = N(6)-(1,2-dicarboxyethyl)-AMP + GDP + phosphate + 2 H(+). It functions in the pathway purine metabolism; AMP biosynthesis via de novo pathway; AMP from IMP: step 1/2. Functionally, plays an important role in the de novo pathway of purine nucleotide biosynthesis. Catalyzes the first committed step in the biosynthesis of AMP from IMP. The protein is Adenylosuccinate synthetase of Rhizobium etli (strain ATCC 51251 / DSM 11541 / JCM 21823 / NBRC 15573 / CFN 42).